A 264-amino-acid polypeptide reads, in one-letter code: MSKVTSSTLLKFKQEGTKFTSITAYDASFAAAFDSEGIDAILVGDSLGMVLQGHDDTLPVTTADVAYHTACVRRGISRALLIADMPFMSYATPEQAMTNATTLMQAGANMVKLEGGHWLLETVTMLTQRGIPVCGHLGLTPQSVHVFGGFKMQGKDEKNAQRILDEALALQDAGAQLLVLECIPAALAKTITQAVAIPVIGIGAGADTDGQILVMHDVLGITSGYIPKFSKNYLKQTGEIRSAIKAYIDEVAAGDFPSEEHTLV.

Positions 45 and 84 each coordinate Mg(2+). 3-methyl-2-oxobutanoate is bound by residues 45–46, aspartate 84, and lysine 112; that span reads DS. Glutamate 114 serves as a coordination point for Mg(2+). Glutamate 181 serves as the catalytic Proton acceptor.

It belongs to the PanB family. As to quaternary structure, homodecamer; pentamer of dimers. Requires Mg(2+) as cofactor.

The protein localises to the cytoplasm. The catalysed reaction is 3-methyl-2-oxobutanoate + (6R)-5,10-methylene-5,6,7,8-tetrahydrofolate + H2O = 2-dehydropantoate + (6S)-5,6,7,8-tetrahydrofolate. The protein operates within cofactor biosynthesis; (R)-pantothenate biosynthesis; (R)-pantoate from 3-methyl-2-oxobutanoate: step 1/2. Functionally, catalyzes the reversible reaction in which hydroxymethyl group from 5,10-methylenetetrahydrofolate is transferred onto alpha-ketoisovalerate to form ketopantoate. In Shewanella denitrificans (strain OS217 / ATCC BAA-1090 / DSM 15013), this protein is 3-methyl-2-oxobutanoate hydroxymethyltransferase.